A 393-amino-acid polypeptide reads, in one-letter code: Acetyl-CoA acetyltransferase (393 aa).

Cysteine 88 functions as the Acyl-thioester intermediate in the catalytic mechanism. Active-site proton acceptor residues include histidine 349 and cysteine 379.

The protein belongs to the thiolase-like superfamily. Thiolase family.

The protein localises to the cytoplasm. The enzyme catalyses 2 acetyl-CoA = acetoacetyl-CoA + CoA. It participates in metabolic intermediate biosynthesis; (R)-mevalonate biosynthesis; (R)-mevalonate from acetyl-CoA: step 1/3. The chain is Acetyl-CoA acetyltransferase (atoB) from Pseudomonas aeruginosa (strain ATCC 15692 / DSM 22644 / CIP 104116 / JCM 14847 / LMG 12228 / 1C / PRS 101 / PAO1).